The primary structure comprises 138 residues: Sec-independent protein translocase protein TatB (138 aa).

A helical transmembrane segment spans residues 1–21 (MFDIGFSELLLIAVVALVVLG). Residues 116-138 (VHHVHVPPPSTSTHGNNGQEKSQ) form a disordered region. Polar residues predominate over residues 126 to 138 (TSTHGNNGQEKSQ).

This sequence belongs to the TatB family. In terms of assembly, the Tat system comprises two distinct complexes: a TatABC complex, containing multiple copies of TatA, TatB and TatC subunits, and a separate TatA complex, containing only TatA subunits. Substrates initially bind to the TatABC complex, which probably triggers association of the separate TatA complex to form the active translocon.

The protein resides in the cell inner membrane. Functionally, part of the twin-arginine translocation (Tat) system that transports large folded proteins containing a characteristic twin-arginine motif in their signal peptide across membranes. Together with TatC, TatB is part of a receptor directly interacting with Tat signal peptides. TatB may form an oligomeric binding site that transiently accommodates folded Tat precursor proteins before their translocation. The sequence is that of Sec-independent protein translocase protein TatB from Xylella fastidiosa (strain Temecula1 / ATCC 700964).